Here is a 188-residue protein sequence, read N- to C-terminus: Protein-export protein SecB (188 aa).

Disordered regions lie at residues 1–21 (MADE…EQPK) and 160–188 (RQKA…DTQQ). The span at 176 to 188 (SDSTAAQGSDTQQ) shows a compositional bias: polar residues.

The protein belongs to the SecB family. As to quaternary structure, homotetramer, a dimer of dimers. One homotetramer interacts with 1 SecA dimer.

The protein localises to the cytoplasm. In terms of biological role, one of the proteins required for the normal export of preproteins out of the cell cytoplasm. It is a molecular chaperone that binds to a subset of precursor proteins, maintaining them in a translocation-competent state. It also specifically binds to its receptor SecA. The polypeptide is Protein-export protein SecB (Alkalilimnicola ehrlichii (strain ATCC BAA-1101 / DSM 17681 / MLHE-1)).